Consider the following 98-residue polypeptide: Large ribosomal subunit protein eL21 (98 aa).

Residues Met-1–Gln-23 form a disordered region. The span at Lys-7–Gln-23 shows a compositional bias: basic residues.

This sequence belongs to the eukaryotic ribosomal protein eL21 family.

This is Large ribosomal subunit protein eL21 from Nanoarchaeum equitans (strain Kin4-M).